The sequence spans 373 residues: tRNA-specific 2-thiouridylase MnmA (373 aa).

ATP-binding positions include 18–25 (AMSGGVDS) and Leu-44. The active-site Nucleophile is the Cys-117. Cys-117 and Cys-214 are disulfide-bonded. Gly-141 lines the ATP pocket. The tract at residues 163–165 (RDQ) is interaction with tRNA. The active-site Cysteine persulfide intermediate is Cys-214.

The protein belongs to the MnmA/TRMU family.

Its subcellular location is the cytoplasm. It catalyses the reaction S-sulfanyl-L-cysteinyl-[protein] + uridine(34) in tRNA + AH2 + ATP = 2-thiouridine(34) in tRNA + L-cysteinyl-[protein] + A + AMP + diphosphate + H(+). Catalyzes the 2-thiolation of uridine at the wobble position (U34) of tRNA, leading to the formation of s(2)U34. This is tRNA-specific 2-thiouridylase MnmA from Paramagnetospirillum magneticum (strain ATCC 700264 / AMB-1) (Magnetospirillum magneticum).